A 182-amino-acid polypeptide reads, in one-letter code: Large ribosomal subunit protein uL6 (182 aa).

It belongs to the universal ribosomal protein uL6 family. As to quaternary structure, part of the 50S ribosomal subunit.

In terms of biological role, this protein binds to the 23S rRNA, and is important in its secondary structure. It is located near the subunit interface in the base of the L7/L12 stalk, and near the tRNA binding site of the peptidyltransferase center. This chain is Large ribosomal subunit protein uL6, found in Methanocaldococcus jannaschii (strain ATCC 43067 / DSM 2661 / JAL-1 / JCM 10045 / NBRC 100440) (Methanococcus jannaschii).